The sequence spans 430 residues: Adenylosuccinate synthetase (430 aa).

Residues 11–17 (GDEGKGK) and 39–41 (GHT) contribute to the GTP site. Aspartate 12 acts as the Proton acceptor in catalysis. The Mg(2+) site is built by aspartate 12 and glycine 39. Residues 12-15 (DEGK), 37-40 (NAGH), threonine 130, arginine 144, asparagine 226, threonine 241, and arginine 305 each bind IMP. Histidine 40 acts as the Proton donor in catalysis. 301 to 307 (VTTGRKR) lines the substrate pocket. Residues arginine 307, 333–335 (KLD), and 415–417 (GTG) contribute to the GTP site.

The protein belongs to the adenylosuccinate synthetase family. In terms of assembly, homodimer. Mg(2+) serves as cofactor.

Its subcellular location is the cytoplasm. It catalyses the reaction IMP + L-aspartate + GTP = N(6)-(1,2-dicarboxyethyl)-AMP + GDP + phosphate + 2 H(+). The protein operates within purine metabolism; AMP biosynthesis via de novo pathway; AMP from IMP: step 1/2. In terms of biological role, plays an important role in the de novo pathway and in the salvage pathway of purine nucleotide biosynthesis. Catalyzes the first committed step in the biosynthesis of AMP from IMP. The polypeptide is Adenylosuccinate synthetase (Scheffersomyces stipitis (strain ATCC 58785 / CBS 6054 / NBRC 10063 / NRRL Y-11545) (Yeast)).